The chain runs to 1062 residues: MFPPSSAPLLLPQLEELVVPLHTAFTLTCQGEATIAWDVPLDVPEKTQEDNSGLFVTTISVDSASAMHTGYYRCFYRRNATEDADEAMQSIYVYVPDPDVPFVPLVVPFGNHVLSDHEEMEIQCRVSDPSANVTLINVDTQQPVPCMYDSKRGALGVFTAGTYVCKGVVNGAEHYSEDYIVHGWIGGSGLHVELTAKHTVLLVGDTITVNCLAQGSEILEDHWKYPGKVANRAIKTVHENKKDQEILYTLTVPQASVKDTGIYSCSITDVVTNMSQTKQIAIRVYASEFMSIQPKFGEYESAELDEVCEFRAEITSFPTASVTWFKDSVPLSNVTAEISTSLQKLSETSYMSVLTLIRAKEEDSGNYTMRVKNGDQSRTVSLILEVKVPAVIVDLMDIHHGSATGQSVVCITRGQPTPLVEWFVCKNIKHCANDTSSWVPLPVNSTEVTMDSRFDEDNNLETQVIFGHLENTLAVRCLARNEMAAVSREIKLVSNGPHPELTVAAAVLVLLVIVIISLIVLVVIWKQKPRYEIRWRVIESVSPDGHEYIYVDPMQLPYDSRWEFPRDRLVLGRILGSGAFGKVVEGTAYGLSRSQPVMKVAVKMLKPTARSSEKQALMSELKIMTHLGPHLNIVNLLGACTKSGPIYIITEYCFYGDLVNYLHKNRESFLNPKPEKSNKKELDIFGINPADESSRSYVILSFESKGDYMDMKQADNTQYVPMLEISNASKYSDLQGSNYDHPPSQKGSNDGEMDQLLSDNMSEGLTTNDLLSFTYQVAKGMEFLASKNCVHRDLAARNVLLSQGKIVKICDFGLARDIMHDNNYVSKGSTFLPVKWMAPESIFDNLYTTLSDVWSYGILLWEIFSLGGTPYPGMIVDSSFYNKIKSGYRMSKPEHAPQDVYDMMMKCWNSEPEKRPSFLGLSDTIASLLPSSYKRHYERVNHEFLKSDHPAVTRVCVDNDDAYIGITYKNQGKLKDRESGFDEQRLSSDSGYIIPLPDLDPISDEEYGKRNRHSSQTSEESAIETGSSSSTFAKREGETLEDITLLDEMCLDCSDLVEDSFL.

The first 27 residues, 1-27 (MFPPSSAPLLLPQLEELVVPLHTAFTL), serve as a signal peptide directing secretion. Ig-like C2-type domains follow at residues 28–96 (TCQG…VYVP), 91–184 (IYVY…VHGW), 190–281 (LHVE…KQIA), 287–381 (SEFM…RTVS), and 389–493 (PAVI…IKLV). Residues 28-504 (TCQGEATIAW…NGPHPELTVA (477 aa)) lie on the Extracellular side of the membrane. Cys-29 and Cys-74 are disulfide-bonded. Residues Asn-79 and Asn-132 are each glycosylated (N-linked (GlcNAc...) asparagine). 2 disulfides stabilise this stretch: Cys-124/Cys-165 and Cys-211/Cys-265. Asn-273, Asn-333, Asn-366, Asn-433, and Asn-444 each carry an N-linked (GlcNAc...) asparagine glycan. The cysteines at positions 410 and 477 are disulfide-linked. Residues 505–525 (AAVLVLLVIVIISLIVLVVIW) form a helical membrane-spanning segment. At 526–1062 (KQKPRYEIRW…CSDLVEDSFL (537 aa)) the chain is on the cytoplasmic side. A phosphotyrosine; by autocatalysis mark is found at Tyr-548 and Tyr-550. The region spanning 569–945 (LVLGRILGSG…HYERVNHEFL (377 aa)) is the Protein kinase domain. Residues 575–583 (LGSGAFGKV) and Lys-603 each bind ATP. 5 positions are modified to phosphotyrosine; by autocatalysis: Tyr-697, Tyr-708, Tyr-719, Tyr-731, and Tyr-739. Residues 734–754 (LQGSNYDHPPSQKGSNDGEMD) form a disordered region. Asp-793 serves as the catalytic Proton acceptor. Residues Tyr-824 and Tyr-963 each carry the phosphotyrosine; by autocatalysis modification. Positions 975–986 (KDRESGFDEQRL) are enriched in basic and acidic residues. Residues 975–1034 (KDRESGFDEQRLSSDSGYIIPLPDLDPISDEEYGKRNRHSSQTSEESAIETGSSSSTFAK) are disordered. Tyr-992 bears the Phosphotyrosine; by autocatalysis mark. Over residues 1014 to 1032 (SSQTSEESAIETGSSSSTF) the composition is skewed to polar residues.

This sequence belongs to the protein kinase superfamily. Tyr protein kinase family. CSF-1/PDGF receptor subfamily. Interacts with homodimeric pdgfa, pdgfb and pdgfc, and with heterodimers formed by pdgfa and pdgfb. monomer in the absence of bound ligand. Interaction with dimeric pdgfa, pdgfb and/or pdgfc leads to receptor dimerization, where both pdgfra homodimers and heterodimers with pdgfrb are observed. Post-translationally, ubiquitinated, leading to its degradation. In terms of processing, autophosphorylated on tyrosine residues upon ligand binding. Autophosphorylation occurs in trans, i.e. one subunit of the dimeric receptor phosphorylates tyrosine residues on the other subunit.

It localises to the cell membrane. The enzyme catalyses L-tyrosyl-[protein] + ATP = O-phospho-L-tyrosyl-[protein] + ADP + H(+). Present in an inactive conformation in the absence of bound ligand. Binding of pdgfa and/or pdgfb leads to dimerization and activation by autophosphorylation on tyrosine residues. In terms of biological role, tyrosine-protein kinase that acts as a cell-surface receptor for pdgfa, pdgfb and pdgfc and plays an essential role in the regulation of embryonic development, cell proliferation, survival and chemotaxis. Depending on the context, promotes or inhibits cell proliferation and cell migration. Plays an important role in the differentiation of bone marrow-derived mesenchymal stem cells. Required for normal skeleton development. Required for normal development of the gastrointestinal tract. Plays a role in cell migration and chemotaxis in wound healing. Plays a role in platelet activation, secretion of agonists from platelet granules, and in thrombin-induced platelet aggregation. Binding of its cognate ligands - homodimeric pdgfa, homodimeric pdgfb, heterodimers formed by pdgfa and pdgfb or homodimeric pdgfc -leads to the activation of several signaling cascades; the response depends on the nature of the bound ligand and is modulated by the formation of heterodimers between pdgfra and pdgfrb. Phosphorylates pik3r1, plcg1, and ptpn11. Activation of plcg1 leads to the production of the cellular signaling molecules diacylglycerol and inositol 1,4,5-trisphosphate, mobilization of cytosolic Ca(2+) and the activation of protein kinase C. Phosphorylates pik3r1, the regulatory subunit of phosphatidylinositol 3-kinase, and thereby mediates activation of the AKT1 signaling pathway. Mediates activation of hras and of the MAP kinases mapk1/erk2 and/or mapk3/erk1. Promotes activation of STAT family members stat1, stat3 and stat5a and/or stat5b. Receptor signaling is down-regulated by protein phosphatases that dephosphorylate the receptor and its down-stream effectors, and by rapid internalization of the activated receptor. The sequence is that of Platelet-derived growth factor receptor alpha (pdgfra) from Takifugu rubripes (Japanese pufferfish).